An 883-amino-acid polypeptide reads, in one-letter code: Pyruvate, phosphate dikinase 2 (883 aa).

A disordered region spans residues 1–21 (MAPAPCGRSSQRVFHFGKGKS). The active-site Tele-phosphohistidine intermediate is H465. Residues R571, R628, E757, G778, T779, N780, and D781 each contribute to the substrate site. Residue E757 coordinates Mg(2+). D781 contacts Mg(2+). Residue C843 is the Proton donor of the active site.

It belongs to the PEP-utilizing enzyme family. Mg(2+) serves as cofactor. Expressed in leaves, roots and stems.

It localises to the cytoplasm. The catalysed reaction is pyruvate + phosphate + ATP = phosphoenolpyruvate + AMP + diphosphate + H(+). In terms of biological role, formation of phosphoenolpyruvate, which is the primary acceptor of CO(2) in C4 and some Crassulacean acid metabolism plants. In Zea mays (Maize), this protein is Pyruvate, phosphate dikinase 2.